The primary structure comprises 285 residues: MARCO-like protein (285 aa).

Residues 1–20 form the signal peptide; the sequence is MRAFIFFLFMLLAMFSASST. Asparagine 24 is a glycosylation site (N-linked (GlcNAc...) asparagine). Disordered regions lie at residues 47–77 and 91–285; these read NHLG…GQPG and GRAG…QGNL. 2 stretches are compositionally biased toward polar residues: residues 57–67 and 105–114; these read KQGGSYTQGNP and SGKSNQKGNP. Residues 115-128 are compositionally biased toward low complexity; that stretch reads ESSNKQENSGSSSQ. Residues 134–145 are compositionally biased toward polar residues; the sequence is ISTQQGNPGSSD. Positions 160-173 are enriched in low complexity; it reads GSSSQQGKPGSSSQ. Polar residues predominate over residues 174-185; the sequence is HGNLGSSTQKGN. Residues 186–220 show a composition bias toward low complexity; that stretch reads LGSSSLQGHLGLSSHQGKPESSGQQGKPGSSSQQG. Residues 221–285 show a composition bias toward polar residues; that stretch reads NLGTSGQQEK…PGSSSRQGNL (65 aa).

The polypeptide is MARCO-like protein (Homo sapiens (Human)).